We begin with the raw amino-acid sequence, 464 residues long: DNA primase DnaG (464 aa).

Residues 200 to 274 form the Toprim domain; sequence DSIIVVEGRA…DVDYVARAPE (75 aa). The Mg(2+) site is built by E206, D248, and D250. The span at 322–332 shows a compositional bias: basic and acidic residues; sequence NGREEKVREVK. Positions 322–359 are disordered; the sequence is NGREEKVREVKPPAPAPAPAPAPKPIEKPEPKEREEKI. The segment covering 333 to 345 has biased composition (pro residues); sequence PPAPAPAPAPAPK. Positions 346–359 are enriched in basic and acidic residues; the sequence is PIEKPEPKEREEKI.

The protein belongs to the archaeal DnaG primase family. In terms of assembly, forms a ternary complex with MCM helicase and DNA. Component of the archaeal exosome complex. Mg(2+) serves as cofactor.

The catalysed reaction is ssDNA + n NTP = ssDNA/pppN(pN)n-1 hybrid + (n-1) diphosphate.. RNA polymerase that catalyzes the synthesis of short RNA molecules used as primers for DNA polymerase during DNA replication. Also part of the exosome, which is a complex involved in RNA degradation. Acts as a poly(A)-binding protein that enhances the interaction between heteromeric, adenine-rich transcripts and the exosome. The protein is DNA primase DnaG of Thermococcus onnurineus (strain NA1).